The chain runs to 271 residues: Cobalt import ATP-binding protein CbiO (271 aa).

In terms of domain architecture, ABC transporter spans 2–236 (LATSDLWFRY…TEAMEHAGLT (235 aa)). 34 to 41 (GANGCGKS) is a binding site for ATP.

The protein belongs to the ABC transporter superfamily. Cobalt importer (TC 3.A.1.18.1) family. In terms of assembly, forms an energy-coupling factor (ECF) transporter complex composed of an ATP-binding protein (A component, CbiO), a transmembrane protein (T component, CbiQ) and 2 possible substrate-capture proteins (S components, CbiM and CbiN) of unknown stoichimetry.

Its subcellular location is the cell inner membrane. It functions in the pathway cofactor biosynthesis; adenosylcobalamin biosynthesis. Functionally, part of the energy-coupling factor (ECF) transporter complex CbiMNOQ involved in cobalt import. Presumably responsible for energy coupling to the transport system. This chain is Cobalt import ATP-binding protein CbiO, found in Salmonella typhi.